The sequence spans 163 residues: Regulator of chromosome segregation (163 aa).

In terms of assembly, interacts with CpsD and ParB.

It is found in the cytoplasm. It localises to the nucleoid. Its subcellular location is the cell membrane. In terms of biological role, required for cell division and chromosome segregation. Binds to DNA and is involved in segregating the origin of replication (oriC) region to new daughter cells. When the nucleoid is not properly segregated, involved in blocking the cell division to protect the nucleoid against premature truncation by the newly forming septum, a function which is dependent on CpsD and its autophosphorylation level. The chain is Regulator of chromosome segregation from Streptococcus pneumoniae serotype 2 (strain D39 / NCTC 7466).